Consider the following 882-residue polypeptide: DNA mismatch repair protein MutS (882 aa).

656–663 (GPNASGKS) provides a ligand contact to ATP.

Belongs to the DNA mismatch repair MutS family.

In terms of biological role, this protein is involved in the repair of mismatches in DNA. It is possible that it carries out the mismatch recognition step. This protein has a weak ATPase activity. The chain is DNA mismatch repair protein MutS from Synechococcus elongatus (strain ATCC 33912 / PCC 7942 / FACHB-805) (Anacystis nidulans R2).